Reading from the N-terminus, the 195-residue chain is HTH-type transcriptional regulator BetI (195 aa).

In terms of domain architecture, HTH tetR-type spans 8–68 (PIRRQQLIEA…ATMRYLISHL (61 aa)). Positions 31–50 (SIVQIARRAGVSNGIISHYF) form a DNA-binding region, H-T-H motif.

Its pathway is amine and polyamine biosynthesis; betaine biosynthesis via choline pathway [regulation]. Functionally, repressor involved in the biosynthesis of the osmoprotectant glycine betaine. It represses transcription of the choline transporter BetT and the genes of BetAB involved in the synthesis of glycine betaine. In Pectobacterium carotovorum subsp. carotovorum (strain PC1), this protein is HTH-type transcriptional regulator BetI.